We begin with the raw amino-acid sequence, 1109 residues long: Myosin ID heavy chain (1109 aa).

Residues 7 to 687 (HGVDDMVMLS…TVFNLEELRE (681 aa)) form the Myosin motor domain. 101–108 (GESGAGKT) serves as a coordination point for ATP. Positions 564–586 (IGALVKALSACTPHYIRCIKPNG) are actin-binding. A TH1 domain is found at 725 to 919 (KERRRLSIER…VSTPSDGLPA (195 aa)). The region spanning 958-1017 (NVKPSAKALYDFDAESSMELSFKEGDILTVLDQSSGDWWDAELKGRRGKVPSNYLQLIKN) is the SH3 domain. The segment at 1017–1109 (NAAPPRAGGP…APRGGMAPRV (93 aa)) is disordered. The span at 1030–1043 (TGNRAPTTTTTSGG) shows a compositional bias: low complexity.

The protein belongs to the TRAFAC class myosin-kinesin ATPase superfamily. Myosin family. As to quaternary structure, myosin I heavy chain is single-headed. Dimer of a heavy and a light chain. Inability to self-assemble into filaments.

The protein localises to the cell projection. Its subcellular location is the pseudopodium. It localises to the cytoplasm. It is found in the cell cortex. Functionally, myosin is a protein that binds to actin and has ATPase activity that is activated by actin. Myosin id may have a role in chemotaxis and aggregation; it could serve to stabilize and even retract cortical structures, such as pseudopods and lamellopods. Involved in the process of phagocytosis. This is Myosin ID heavy chain (myoD) from Dictyostelium discoideum (Social amoeba).